We begin with the raw amino-acid sequence, 382 residues long: Queuine tRNA-ribosyltransferase (382 aa).

Catalysis depends on Asp93, which acts as the Proton acceptor. Substrate is bound by residues 93 to 97 (DSGGF), Asp147, Gln191, and Gly218. Residues 249 to 255 (GVGKPED) form an RNA binding region. Asp268 serves as the catalytic Nucleophile. An RNA binding; important for wobble base 34 recognition region spans residues 273–277 (TRNAR). Zn(2+) contacts are provided by Cys306, Cys308, Cys311, and His337.

It belongs to the queuine tRNA-ribosyltransferase family. As to quaternary structure, homodimer. Within each dimer, one monomer is responsible for RNA recognition and catalysis, while the other monomer binds to the replacement base PreQ1. Zn(2+) is required as a cofactor.

It carries out the reaction 7-aminomethyl-7-carbaguanine + guanosine(34) in tRNA = 7-aminomethyl-7-carbaguanosine(34) in tRNA + guanine. It functions in the pathway tRNA modification; tRNA-queuosine biosynthesis. Functionally, catalyzes the base-exchange of a guanine (G) residue with the queuine precursor 7-aminomethyl-7-deazaguanine (PreQ1) at position 34 (anticodon wobble position) in tRNAs with GU(N) anticodons (tRNA-Asp, -Asn, -His and -Tyr). Catalysis occurs through a double-displacement mechanism. The nucleophile active site attacks the C1' of nucleotide 34 to detach the guanine base from the RNA, forming a covalent enzyme-RNA intermediate. The proton acceptor active site deprotonates the incoming PreQ1, allowing a nucleophilic attack on the C1' of the ribose to form the product. After dissociation, two additional enzymatic reactions on the tRNA convert PreQ1 to queuine (Q), resulting in the hypermodified nucleoside queuosine (7-(((4,5-cis-dihydroxy-2-cyclopenten-1-yl)amino)methyl)-7-deazaguanosine). This chain is Queuine tRNA-ribosyltransferase, found in Actinobacillus pleuropneumoniae serotype 5b (strain L20).